Reading from the N-terminus, the 201-residue chain is Translation initiation factor IF-3 (201 aa).

The protein belongs to the IF-3 family. In terms of assembly, monomer.

It localises to the cytoplasm. Functionally, IF-3 binds to the 30S ribosomal subunit and shifts the equilibrium between 70S ribosomes and their 50S and 30S subunits in favor of the free subunits, thus enhancing the availability of 30S subunits on which protein synthesis initiation begins. The sequence is that of Translation initiation factor IF-3 from Mycoplasma pneumoniae (strain ATCC 29342 / M129 / Subtype 1) (Mycoplasmoides pneumoniae).